We begin with the raw amino-acid sequence, 297 residues long: HTH-type transcriptional regulator ArgP (297 aa).

The HTH lysR-type domain occupies 4 to 60 (PDYRTLQALDAVIRERGFERAAQKLCITQSAVSQRIKQLENMFGQPLLVRTVPPRPT). Positions 21–40 (FERAAQKLCITQSAVSQRIK) form a DNA-binding region, H-T-H motif.

Belongs to the LysR transcriptional regulatory family. As to quaternary structure, homodimer.

Controls the transcription of genes involved in arginine and lysine metabolism. The protein is HTH-type transcriptional regulator ArgP of Salmonella arizonae (strain ATCC BAA-731 / CDC346-86 / RSK2980).